The sequence spans 160 residues: MSTNSYYSSASSSGFRVCPPGVPSKCWCGEEIITFTSKTKENPYRRFYRCAIAMKRENEEHLFKWVDEALLDEIKMVNEKCKRVVENISDLRMNVMANMELLNKNAKQMEEELIKKMEGELLTMKENVEELGHVMAKSALKTVGVAVVIVASIVWLWGRV.

Cys26, Cys28, Cys50, and His61 together coordinate Zn(2+). A GRF-type; atypical zinc finger spans residues 26–69 (CWCGEEIITFTSKTKENPYRRFYRCAIAMKRENEEHLFKWVDEA).

This is an uncharacterized protein from Arabidopsis thaliana (Mouse-ear cress).